We begin with the raw amino-acid sequence, 174 residues long: Ribosome maturation factor RimM (174 aa).

A PRC barrel domain is found at 98-171 (EDEYYFHEII…TIKIHIMEGL (74 aa)).

Belongs to the RimM family. In terms of assembly, binds ribosomal protein uS19.

It is found in the cytoplasm. Functionally, an accessory protein needed during the final step in the assembly of 30S ribosomal subunit, possibly for assembly of the head region. Essential for efficient processing of 16S rRNA. May be needed both before and after RbfA during the maturation of 16S rRNA. It has affinity for free ribosomal 30S subunits but not for 70S ribosomes. The sequence is that of Ribosome maturation factor RimM from Bacillus licheniformis (strain ATCC 14580 / DSM 13 / JCM 2505 / CCUG 7422 / NBRC 12200 / NCIMB 9375 / NCTC 10341 / NRRL NRS-1264 / Gibson 46).